We begin with the raw amino-acid sequence, 674 residues long: Methionine--tRNA ligase (674 aa).

The 'HIGH' region motif lies at 11 to 21; that stretch reads PYANGDLHLGH. 4 residues coordinate Zn(2+): Cys-142, Cys-145, Cys-155, and Cys-158. The short motif at 330-334 is the 'KMSKS' region element; the sequence is KMSKS. Lys-333 is a binding site for ATP. Residues 574-674 form the tRNA-binding domain; it reads DFMKVDLRIA…EGAQPGMRVK (101 aa).

It belongs to the class-I aminoacyl-tRNA synthetase family. MetG type 1 subfamily. In terms of assembly, homodimer. Zn(2+) is required as a cofactor.

The protein localises to the cytoplasm. It catalyses the reaction tRNA(Met) + L-methionine + ATP = L-methionyl-tRNA(Met) + AMP + diphosphate. Its function is as follows. Is required not only for elongation of protein synthesis but also for the initiation of all mRNA translation through initiator tRNA(fMet) aminoacylation. The sequence is that of Methionine--tRNA ligase from Francisella tularensis subsp. holarctica (strain OSU18).